We begin with the raw amino-acid sequence, 150 residues long: UPF0506 protein SJCHGC09643 (150 aa).

Positions 1-18 (MNTCIQLLILCLVTVINS) are cleaved as a signal peptide. Asparagine 20, asparagine 32, asparagine 48, and asparagine 110 each carry an N-linked (GlcNAc...) asparagine glycan. Disulfide bonds link cysteine 116–cysteine 130, cysteine 123–cysteine 134, and cysteine 129–cysteine 139.

Belongs to the UPF0506 family.

Its subcellular location is the secreted. This is UPF0506 protein SJCHGC09643 from Schistosoma japonicum (Blood fluke).